Consider the following 161-residue polypeptide: Eukaryotic translation initiation factor 5A-1 (161 aa).

Lys54 is modified (hypusine).

This sequence belongs to the eIF-5A family. In terms of processing, lys-54 undergoes hypusination, a unique post-translational modification that consists in the addition of a butylamino group from spermidine to lysine side chain, leading to the formation of the unusual amino acid hypusine. eIF-5As are the only known proteins to undergo this modification, which is essential for their function. Expressed specifically in the germline in the distal region of gonads where germ cells actively proliferate.

It localises to the cytoplasm. Translation factor that promotes translation elongation and termination, particularly upon ribosome stalling at specific amino acid sequence contexts. Binds between the exit (E) and peptidyl (P) site of the ribosome and promotes rescue of stalled ribosome: specifically required for efficient translation of polyproline-containing peptides as well as other motifs that stall the ribosome. Acts as a ribosome quality control (RQC) cofactor by joining the RQC complex to facilitate peptidyl transfer during CAT tailing step. Required for mitotic germ cell proliferation, gametogenesis after entry into meiosis, and localization of the P granule component pgl-1 on P granules. The chain is Eukaryotic translation initiation factor 5A-1 (iff-1) from Caenorhabditis elegans.